The sequence spans 332 residues: 6-phosphogluconolactonase (332 aa).

Belongs to the cycloisomerase 2 family.

The enzyme catalyses 6-phospho-D-glucono-1,5-lactone + H2O = 6-phospho-D-gluconate + H(+). It participates in carbohydrate degradation; pentose phosphate pathway; D-ribulose 5-phosphate from D-glucose 6-phosphate (oxidative stage): step 2/3. In terms of biological role, catalyzes the hydrolysis of 6-phosphogluconolactone to 6-phosphogluconate. The chain is 6-phosphogluconolactonase from Pectobacterium carotovorum subsp. carotovorum (strain PC1).